Consider the following 395-residue polypeptide: Proteinase-activated receptor 4 (395 aa).

Residues 1 to 16 (MCWPLLYPLMLGFSIS) form the signal peptide. Positions 17 to 58 (PAECQTPSIYDDVESTREGQEASLRPTVELNESKSPDKPNPR) are cleaved as a propeptide — removed for receptor activation. Residues 46–66 (LNESKSPDKPNPRGFPGKPCA) form a disordered region. Positions 47 to 56 (NESKSPDKPN) are enriched in basic and acidic residues. Residues 59–93 (GFPGKPCANNSDTLELPASSEALLLGWVPTRLVPA) lie on the Extracellular side of the membrane. Residue N67 is glycosylated (N-linked (GlcNAc...) asparagine). The helical transmembrane segment at 94 to 114 (IYGLVVVVGLPANGLALWVLA) threads the bilayer. At 115–119 (TRVPR) the chain is on the cytoplasmic side. The helical transmembrane segment at 120–140 (LPSTILLMNLAVADLLLALVL) threads the bilayer. The Extracellular segment spans residues 141 to 161 (PPRLVYHLRGQRWPFGEAACR). A disulfide bridge connects residues C160 and C239. Residues 162 to 182 (VATAALYGHMYGSVLLLAAVS) form a helical membrane-spanning segment. Over 183–203 (LDRYLALVHSLRARALRGQRL) the chain is Cytoplasmic. A helical membrane pass occupies residues 204-224 (TTILCLVAWLSAATLVLPLTF). The Extracellular segment spans residues 225-254 (HRQTFLLAGSDRMLCHDALPLAEQTSHWRP). A helical transmembrane segment spans residues 255–275 (AFICLAVLGCFVPLLAMVLCY). Over 276 to 295 (GATLRALAANGQRYSHAVRL) the chain is Cytoplasmic. The helical transmembrane segment at 296 to 316 (TALVLFSAVAAFTPSNVLLVL) threads the bilayer. Over 317–330 (HYSNPSPEAWGNLY) the chain is Extracellular. Residues 331-354 (GAYVPSLALSTLNSCVDPFIYYYV) form a helical membrane-spanning segment. The Cytoplasmic portion of the chain corresponds to 355 to 395 (SHEFREKVRAMLCRQLKASSSSQASREAGSRGTAICSSTLL).

This sequence belongs to the G-protein coupled receptor 1 family. In terms of processing, a proteolytic cleavage generates a new N-terminus that functions as a tethered ligand.

The protein localises to the cell membrane. Functionally, receptor for activated thrombin or trypsin coupled to G proteins that stimulate phosphoinositide hydrolysis. May play a role in platelets activation. In Rattus norvegicus (Rat), this protein is Proteinase-activated receptor 4 (F2rl3).